Here is a 288-residue protein sequence, read N- to C-terminus: MALFRKKDKYIRITPNNSLKGSVSQVIPEVPDELFAKCPACKHMIYKKDLGLAKICPTCSYNFRISAQERLTLTVDEGSFQELFTSIETKDPLRFPGYQEKLQKAKETTGLHEAVLTGKAMVKEQKIALAIMDSHFIMASMGTVVGEKITRLFELAIEENLPVVIFTASGGARMQEGIMSLMQMAKVSAAVKRHSNAGLFYLTILTDPTTGGVTASFAMEGDIILAEPQSLVGFAGRRVIETTVRENLPDDFQKAEFLQDHGFVDAIVKRTELRDKVAHLVAFHGGGQ.

The 255-residue stretch at 34 to 288 folds into the CoA carboxyltransferase N-terminal domain; sequence LFAKCPACKH…HLVAFHGGGQ (255 aa). The Zn(2+) site is built by C38, C41, C56, and C59. The C4-type zinc-finger motif lies at 38–59; it reads CPACKHMIYKKDLGLAKICPTC.

It belongs to the AccD/PCCB family. Acetyl-CoA carboxylase is a heterohexamer composed of biotin carboxyl carrier protein (AccB), biotin carboxylase (AccC) and two subunits each of ACCase subunit alpha (AccA) and ACCase subunit beta (AccD). Zn(2+) serves as cofactor.

The protein resides in the cytoplasm. The catalysed reaction is N(6)-carboxybiotinyl-L-lysyl-[protein] + acetyl-CoA = N(6)-biotinyl-L-lysyl-[protein] + malonyl-CoA. Its pathway is lipid metabolism; malonyl-CoA biosynthesis; malonyl-CoA from acetyl-CoA: step 1/1. Functionally, component of the acetyl coenzyme A carboxylase (ACC) complex. Biotin carboxylase (BC) catalyzes the carboxylation of biotin on its carrier protein (BCCP) and then the CO(2) group is transferred by the transcarboxylase to acetyl-CoA to form malonyl-CoA. This is Acetyl-coenzyme A carboxylase carboxyl transferase subunit beta from Streptococcus dysgalactiae subsp. equisimilis (strain GGS_124).